We begin with the raw amino-acid sequence, 345 residues long: Myb/SANT-like DNA-binding domain-containing protein 4 (345 aa).

Residues 4-77 form the Myb-like domain; sequence LKRKRKSNFS…EVKRRYLDWR (74 aa). K9 participates in a covalent cross-link: Glycyl lysine isopeptide (Lys-Gly) (interchain with G-Cter in SUMO2). S106 is modified (phosphoserine). Residues K114 and K142 each participate in a glycyl lysine isopeptide (Lys-Gly) (interchain with G-Cter in SUMO2) cross-link. Residues 141–175 are disordered; sequence VKVEEEERDPQSPEFEIEEEEEMLSSVIPDSRREN. T188 is subject to Phosphothreonine. Residues 202 to 344 are a coiled coil; it reads HLLMNIEKQK…RLRIQKEGHL (143 aa). Glycyl lysine isopeptide (Lys-Gly) (interchain with G-Cter in SUMO2) cross-links involve residues K237, K254, and K273.

The chain is Myb/SANT-like DNA-binding domain-containing protein 4 (Msantd4) from Rattus norvegicus (Rat).